The primary structure comprises 44 residues: M-factor (44 aa).

The propeptide occupies 1-32; the sequence is MDSIATNTHSSSIVNAYNNNPTDVVKTQNIKN. Cysteine 41 bears the Cysteine methyl ester mark. Cysteine 41 is lipidated: S-farnesyl cysteine. Residues 42–44 constitute a propeptide, removed in mature form; it reads VIA.

Its subcellular location is the secreted. Its function is as follows. M-factor is a mating pheromone produced by M-type mating cells. All three mfm genes contribute to the production of M-factor. This chain is M-factor (mfm2), found in Schizosaccharomyces pombe (strain 972 / ATCC 24843) (Fission yeast).